The following is a 109-amino-acid chain: Cell division suppressor protein YneA (109 aa).

In terms of domain architecture, LysM spans 39–90; it reads SEVDVNEGDSIWALADQYAAKSDMAKADFVSWVEKENNLTDGHVKAGDYVVI.

It belongs to the YneA family.

It is found in the cytoplasm. Inhibits cell division during the SOS response. Affects a later stage of the cell division protein assembly, after the assembly of the Z ring, by probably suppressing recruitment of FtsL and/or DivIC to the division machinery. This is Cell division suppressor protein YneA from Listeria innocua serovar 6a (strain ATCC BAA-680 / CLIP 11262).